The sequence spans 868 residues: Lysosomal cholesterol signaling protein (868 aa).

Residues 1-36 (MDSYFSAKNSTLAGDMNATWPASHGFNATGDPPSMS) are Lumenal-facing. Residues 1–368 (MDSYFSAKNS…SAWLLTFPTM (368 aa)) are PIN-like transporter. 3 N-linked (GlcNAc...) asparagine glycosylation sites follow: Asn-9, Asn-17, and Asn-27. A helical membrane pass occupies residues 37-57 (ITRLFPALLECFGIVLCGYIA). 2 residues coordinate cholesterol: Phe-41 and Tyr-55. The Cytoplasmic segment spans residues 58–77 (GRANIITSTQAKGLGNFVSR). Residues 78-98 (FALPALLFKNMVVLNFSNVDW) traverse the membrane as a helical segment. Topologically, residues 99–102 (AFLY) are lumenal. Residues 103 to 123 (SVLIGKASVFFIVCVLTLLVA) form a helical membrane-spanning segment. Over 124–131 (SPESRFSK) the chain is Cytoplasmic. The chain crosses the membrane as a discontinuously helical span at residues 132–152 (AGLFPIFATQSNDFALGYPIV). The Lumenal portion of the chain corresponds to 153–165 (EALYQSTYPEYLQ). A helical transmembrane segment spans residues 166–186 (YIYLVAPISLMMLNPIGFIFC). The Cytoplasmic portion of the chain corresponds to 187–211 (EIQKSKDTQNASQNKAKIVGLGFLR). Residues 212 to 232 (VLQNPIVFMVFVGIAFNFILD) traverse the membrane as a discontinuously helical segment. Residues 233–241 (KKIPVYMEN) lie on the Lumenal side of the membrane. Residues 242 to 262 (FLDGLANSFSGSALFYLGLTM) traverse the membrane as a discontinuously helical segment. The Cytoplasmic segment spans residues 263 to 271 (VGKIRRLKK). Gly-264, Lys-265, and Ile-266 together coordinate cholesterol. Residues 272–292 (SAFVVLTLLITAKLLVLPLLC) traverse the membrane as a helical segment. The Lumenal portion of the chain corresponds to 293–313 (REMVELLDKGDSVVNHTSLSN). N-linked (GlcNAc...) asparagine glycosylation occurs at Asn-307. Residues 314 to 334 (YAFLYGVFPVAPGVAIFATQF) form a discontinuously helical membrane-spanning segment. At 335–344 (NMEVEIITSG) the chain is on the cytoplasmic side. A helical transmembrane segment spans residues 345–365 (MVISTFVSAPIMYVSAWLLTF). The Lumenal segment spans residues 366–379 (PTMDAKPLAYAIQN). A GPCR region spans residues 378–715 (QNVSFDISII…FGIFGLDKHL (338 aa)). Asn-379 carries an N-linked (GlcNAc...) asparagine glycan. Residues 380–400 (VSFDISIISLVSLIWSLSILL) form a helical membrane-spanning segment. Residues 401–412 (LSKKYKQLPHML) lie on the Cytoplasmic side of the membrane. A helical membrane pass occupies residues 413–433 (TANLLIAQTIVCAGMMIWNFV). Residues 434–436 (KEK) lie on the Lumenal side of the membrane. A helical transmembrane segment spans residues 437–457 (NFVGQILVFVLLYSSLYSTYL). Residues 458–478 (WTGLLAVSLFLLKKRESVQLP) are Cytoplasmic-facing. The helical transmembrane segment at 479-499 (VGIIIISGWGIPALLVGVLLI) threads the bilayer. The Lumenal portion of the chain corresponds to 500–518 (TGKHNGDSIDSAFFYGKEQ). A helical transmembrane segment spans residues 519-539 (MITTAVTLFCSILIAGVSLMC). The Cytoplasmic segment spans residues 540-658 (MNRTTQAGHY…GDPQLTRHVL (119 aa)). The tract at residues 550–582 (EGFGQSQNHKPVEPGSTAFEENPAPTNEPELFP) is disordered. Arg-655 lines the cholesterol pocket. Residues 659–679 (LCLLLIIGLFANLSSCLWWLF) traverse the membrane as a helical segment. Residues 680–689 (NHETGRLYVE) lie on the Lumenal side of the membrane. A helical transmembrane segment spans residues 690 to 710 (LQFFCAVFNFGQGFISFGIFG). Residues 711–868 (LDKHLIILPF…SSPPSVSPKT (158 aa)) are Cytoplasmic-facing. The DEP domain maps to 755 to 833 (YHRDLCIRNI…DEYLFYRFLQ (79 aa)). A disordered region spans residues 836-868 (PEQSPPARTLRDHQEESYKEIGHSSPPSVSPKT). The span at 844 to 857 (TLRDHQEESYKEIG) shows a compositional bias: basic and acidic residues.

As to quaternary structure, homodimer; via the transporter region and DEP domain. Interacts with the GATOR1 complex; preventing interaction between GATOR1 and KICSTOR; interaction is disrupted upon cholesterol starvation. As to expression, widely expressed in adult tissues and during development. In brain, widely distributed in forebrain regions, while it shows a more restricted distribution in the midbrain and hindbrain regions. Expressed at highest level in the lateral part of striatum and hippocampus.

It localises to the lysosome membrane. Functionally, cholesterol-binding protein that acts as a regulator of mTORC1 signaling pathway. Acts as a sensor of cholesterol to signal cholesterol sufficiency to mTORC1: in presence of cholesterol, binds cholesterol, leading to disruption of the interaction between the GATOR1 and KICSTOR complexes and promotion of mTORC1 signaling. Upon cholesterol starvation, GPR155/LYCHOS is unable to perturb the association between GATOR1 and KICSTOR, leading to mTORC1 signaling inhibition. Binds indole-3-acetic acid and may play a role in tryptophan metabolism. In Mus musculus (Mouse), this protein is Lysosomal cholesterol signaling protein.